The following is a 537-amino-acid chain: O-phosphoserine--tRNA(Cys) ligase (537 aa).

Substrate is bound by residues 186–188 (HMT), 231–233 (SAS), 273–274 (YY), and N317.

The protein belongs to the class-II aminoacyl-tRNA synthetase family. O-phosphoseryl-tRNA(Cys) synthetase subfamily. In terms of assembly, homotetramer. Interacts with SepCysS.

It carries out the reaction tRNA(Cys) + O-phospho-L-serine + ATP = O-phospho-L-seryl-tRNA(Cys) + AMP + diphosphate. In terms of biological role, catalyzes the attachment of O-phosphoserine (Sep) to tRNA(Cys). The sequence is that of O-phosphoserine--tRNA(Cys) ligase from Methanococcus maripaludis (strain C6 / ATCC BAA-1332).